A 156-amino-acid chain; its full sequence is Non-structural protein 2 (156 aa).

It belongs to the pneumovirus non-structural protein 2 family.

It is found in the host cytoplasm. Plays a major role in antagonizing the type I IFN-mediated antiviral response. May also inhibit viral transcription and RNA replication. This Mus musculus (Mouse) protein is Non-structural protein 2 (1B).